A 751-amino-acid chain; its full sequence is Nibrin (751 aa).

The 60-residue stretch at 24–83 (YVVGRKNCGILIENDQSISRNHAVLTVNFPVTSLSQTDEIPTLTIKDNSKYGTFVNEEKM) folds into the FHA domain. BRCT domains are found at residues 105–181 (KFRV…SEFL) and 224–315 (GKTF…LAVI). The segment at 111 to 328 (EPLVVCSSCL…TENYCNPQGQ (218 aa)) is mediates interaction with SP100. The segment at 221–403 (IFKGKTFVFL…SRKLSQETFN (183 aa)) is interaction with MTOR, MAPKAP1 and RICTOR. At threonine 337 the chain carries Phosphothreonine. Serine 343 carries the phosphoserine; by ATM modification. Serine 347 and serine 398 each carry phosphoserine. The segment at 389–418 (GLEQSSRKLSQETFNIKEAPKPSSKANNVA) is disordered. Position 433 is a phosphoserine; by CDK2 (serine 433). A Glycyl lysine isopeptide (Lys-Gly) (interchain with G-Cter in ubiquitin) cross-link involves residue lysine 436. Disordered regions lie at residues 444-479 (KDWT…SSCK) and 491-550 (EQTQ…RKRK). Over residues 446-457 (WTSQQQQNSIKN) the composition is skewed to polar residues. The Nuclear localization signal motif lies at 461-467 (PCTRKRE). Composition is skewed to basic and acidic residues over residues 502–518 (KSKE…READ) and 528–539 (ELNRKSPDRKPL). Serine 508 is modified (phosphoserine). Glycyl lysine isopeptide (Lys-Gly) (interchain with G-Cter in SUMO2) cross-links involve residues lysine 569 and lysine 580. The disordered stretch occupies residues 576 to 645 (VKVEKQEADD…ANSDGLQDSS (70 aa)). Basic and acidic residues-rich tracts occupy residues 577 to 599 (KVEK…ERNR) and 615 to 636 (EDER…HEIA). Glycyl lysine isopeptide (Lys-Gly) (interchain with G-Cter in ubiquitin) cross-links involve residues lysine 684, lysine 688, and lysine 733. Residues 731–742 (QAKEESLADDLF) are compositionally biased toward basic and acidic residues. A disordered region spans residues 731–751 (QAKEESLADDLFRYNPNVKRR). The FxF/Y motif signature appears at 738–747 (ADDLFRYNPN).

The protein belongs to the Nibrin family. In terms of assembly, component of the MRN complex composed of two heterodimers RAD50 and MRE11 associated with a single NBN. The MRN complexes dimerize on DNA to form joined MRN-MRN oligomers required for DNA double-strand break repair. As part of the MRN complex, interacts with MCM9; the interaction recruits the complex to DNA repair sites. Component of the BASC complex, at least composed of BRCA1, MSH2, MSH6, MLH1, ATM, BLM, RAD50, MRE11 and NBN. Interacts with histone H2AX; this requires phosphorylation of H2AX on 'Ser-139' and promotes NBN recruitment to DNA damage sites. Interacts with (phosphorylated) MDC1; promoting NBN recruitment to DNA damage sites. Interacts with (phosphorylated) RAD17; promoting NBN recruitment to DNA damage sites. Interacts (via FxF/Y motif) with ATM. Interacts with HJURP. Interacts with INTS3. Interacts with KPNA2. Interacts with TERF2; interaction is disrupted upon NBN phosphorylation by CDK2. Interacts with (phosphorylated) RBBP8/CtIP; the interaction links the role of the MRN complex in DNA double-strand break sensing to resection. Interacts with SP100; recruits NBN to PML bodies. Interacts with ATF2. Interacts with MTOR, MAPKAP1 isoform 2 and RICTOR; indicative for an association with the mTORC2 complex. Interacts with MRNIP. Interacts with UFL1; promoting UFL1 recruitment to double-strand breaks following DNA damage. Interacts with CYREN (via XLF motif). In terms of processing, ubiquitinated at Lys-436 via 'Lys-6'-linked ubiquitin chains by RNF8, promoting NBN recruitment to DNA double-strand breaks (DSBs). Ubiquitinated at Lys-684 and Lys-688 via 'Lys-63'-linked ubiquitin chains by PELI1: ubiquitination takes place following PELI1 phosphorylation and promotes ATM activation and DNA repair. Ubiquitinated at Lys-733 via 'Lys-63'-linked ubiquitin chains by the SCF(SKP2) complex: ubiquitination takes place following SKP2 phosphorylation and promotes ATM activation and DNA repair. Phosphorylated by ATM in response of ionizing radiation, and such phosphorylation is responsible intra-S phase checkpoint control and telomere maintenance. Phosphorylated at Ser-433 by CDK2 in S/G2 phases abolishes interaction with TERF2, enabling DCLRE1B/Apollo recruitment to telomeres. Phosphorylation at Ser-433 in response to dysfunctional telomeres promotes non-homologous end joining repair at telomeres, while dephosphorylation by PPP1CA promotes microhomology-mediated end-joining (MMEJ) repair. High expression in the liver, heart and testis. Low expression in all other tissues analyzed. In the cerebellum the postmitotic Purkinje cells are marked specifically.

The protein resides in the nucleus. It is found in the chromosome. It localises to the PML body. The protein localises to the telomere. In terms of biological role, component of the MRN complex, which plays a central role in double-strand break (DSB) repair, DNA recombination, maintenance of telomere integrity and meiosis. The MRN complex is involved in the repair of DNA double-strand breaks (DSBs) via homologous recombination (HR), an error-free mechanism which primarily occurs during S and G2 phases. The complex (1) mediates the end resection of damaged DNA, which generates proper single-stranded DNA, a key initial steps in HR, and is (2) required for the recruitment of other repair factors and efficient activation of ATM and ATR upon DNA damage. The MRN complex possesses single-strand endonuclease activity and double-strand-specific 3'-5' exonuclease activity, which are provided by MRE11, to initiate end resection, which is required for single-strand invasion and recombination. Within the MRN complex, NBN acts as a protein-protein adapter, which specifically recognizes and binds phosphorylated proteins, promoting their recruitment to DNA damage sites. Recruits MRE11 and RAD50 components of the MRN complex to DSBs in response to DNA damage. Promotes the recruitment of PI3/PI4-kinase family members ATM, ATR, and probably DNA-PKcs to the DNA damage sites, activating their functions. Mediates the recruitment of phosphorylated RBBP8/CtIP to DSBs, leading to cooperation between the MRN complex and RBBP8/CtIP to initiate end resection. RBBP8/CtIP specifically promotes the endonuclease activity of the MRN complex to clear DNA ends containing protein adducts. The MRN complex is also required for the processing of R-loops. NBN also functions in telomere length maintenance via its interaction with TERF2: interaction with TERF2 during G1 phase preventing recruitment of DCLRE1B/Apollo to telomeres. NBN also promotes DNA repair choice at dysfunctional telomeres: NBN phosphorylation by CDK2 promotes non-homologous end joining repair at telomeres, while unphosphorylated NBN promotes microhomology-mediated end-joining (MMEJ) repair. Enhances AKT1 phosphorylation possibly by association with the mTORC2 complex. This is Nibrin from Mus musculus (Mouse).